Consider the following 596-residue polypeptide: Adenine deaminase (596 aa).

This sequence belongs to the metallo-dependent hydrolases superfamily. Adenine deaminase family. It depends on Mn(2+) as a cofactor.

It catalyses the reaction adenine + H2O + H(+) = hypoxanthine + NH4(+). This chain is Adenine deaminase, found in Moorella thermoacetica (strain ATCC 39073 / JCM 9320).